Consider the following 215-residue polypeptide: Urease accessory protein UreF (215 aa).

Belongs to the UreF family. In terms of assembly, ureD, UreF and UreG form a complex that acts as a GTP-hydrolysis-dependent molecular chaperone, activating the urease apoprotein by helping to assemble the nickel containing metallocenter of UreC. The UreE protein probably delivers the nickel.

Its subcellular location is the cytoplasm. Its function is as follows. Required for maturation of urease via the functional incorporation of the urease nickel metallocenter. The sequence is that of Urease accessory protein UreF from Paracoccus denitrificans (strain Pd 1222).